Here is a 336-residue protein sequence, read N- to C-terminus: Probable allantoicase 2 (336 aa).

This sequence belongs to the allantoicase family.

It carries out the reaction allantoate + H2O = (S)-ureidoglycolate + urea. The protein operates within nitrogen metabolism; (S)-allantoin degradation; (S)-ureidoglycolate from allantoate (aminidohydrolase route): step 1/1. This Burkholderia pseudomallei (strain K96243) protein is Probable allantoicase 2.